The following is a 241-amino-acid chain: 2-C-methyl-D-erythritol 4-phosphate cytidylyltransferase (241 aa).

Belongs to the IspD/TarI cytidylyltransferase family. IspD subfamily.

It carries out the reaction 2-C-methyl-D-erythritol 4-phosphate + CTP + H(+) = 4-CDP-2-C-methyl-D-erythritol + diphosphate. It participates in isoprenoid biosynthesis; isopentenyl diphosphate biosynthesis via DXP pathway; isopentenyl diphosphate from 1-deoxy-D-xylulose 5-phosphate: step 2/6. Functionally, catalyzes the formation of 4-diphosphocytidyl-2-C-methyl-D-erythritol from CTP and 2-C-methyl-D-erythritol 4-phosphate (MEP). The polypeptide is 2-C-methyl-D-erythritol 4-phosphate cytidylyltransferase (Baumannia cicadellinicola subsp. Homalodisca coagulata).